The sequence spans 86 residues: Envelope glycoprotein N (86 aa).

The signal sequence occupies residues 1–29 (MTLYKIVSKPIILLAFFFTRVVFTNEVDG). Over 30–47 (EELFYKPTCHSDTYEIIL) the chain is Virion surface. Residues 48-68 (KKFSSIWILVNTFILLCSFSL) traverse the membrane as a helical segment. The Intravirion segment spans residues 69–86 (FLKYWCFKTLAKETVKGY).

It belongs to the herpesviridae glycoprotein N family. In terms of assembly, interacts (via N-terminus) with gM (via N-terminus). The gM-gN heterodimer forms the gCII complex.

It is found in the virion membrane. Its subcellular location is the host membrane. The protein resides in the host Golgi apparatus. The protein localises to the host trans-Golgi network. Envelope glycoprotein necessary for proper maturation of gM and modulation of its membrane fusion activity. Also plays a critical role in virion morphogenesis. The polypeptide is Envelope glycoprotein N (Homo sapiens (Human)).